The sequence spans 258 residues: uncharacterized protein (258 aa).

The span at 40–54 (AQKTDTPLDSSSYAV) shows a compositional bias: polar residues. A disordered region spans residues 40–63 (AQKTDTPLDSSSYAVTSPEEAPNE).

This is an uncharacterized protein from Treponema pallidum (strain Nichols).